We begin with the raw amino-acid sequence, 145 residues long: Antiholin-like protein LrgA (145 aa).

4 consecutive transmembrane segments (helical) span residues 13 to 30 (FFHQ…SKII), 40 to 62 (GSVI…LGEV), 69 to 91 (LTNN…LGVI), and 95 to 117 (PFLI…GYVT).

It belongs to the CidA/LrgA family. LrgA subfamily.

It localises to the cell membrane. In terms of biological role, inhibits the expression or activity of extracellular murein hydrolases by interacting, possibly with LrgB, with the holin-like proteins CidA and/or CidB. The LrgAB and CidAB proteins may affect the proton motive force of the membrane. May be involved in programmed cell death (PCD), possibly triggering PCD in response to antibiotics and environmental stresses. In Staphylococcus aureus (strain MW2), this protein is Antiholin-like protein LrgA.